The following is a 294-amino-acid chain: 4-diphosphocytidyl-2-C-methyl-D-erythritol kinase (294 aa).

The active site involves K16. Residue 99–109 (PMGAGLGGGSS) participates in ATP binding. The active site involves D141.

The protein belongs to the GHMP kinase family. IspE subfamily.

The enzyme catalyses 4-CDP-2-C-methyl-D-erythritol + ATP = 4-CDP-2-C-methyl-D-erythritol 2-phosphate + ADP + H(+). Its pathway is isoprenoid biosynthesis; isopentenyl diphosphate biosynthesis via DXP pathway; isopentenyl diphosphate from 1-deoxy-D-xylulose 5-phosphate: step 3/6. Catalyzes the phosphorylation of the position 2 hydroxy group of 4-diphosphocytidyl-2C-methyl-D-erythritol. The protein is 4-diphosphocytidyl-2-C-methyl-D-erythritol kinase of Polynucleobacter asymbioticus (strain DSM 18221 / CIP 109841 / QLW-P1DMWA-1) (Polynucleobacter necessarius subsp. asymbioticus).